We begin with the raw amino-acid sequence, 80 residues long: uncharacterized protein (80 aa).

The segment at 57–80 (GNIDSDVSDQDQIGNPSAPISNQI) is disordered.

This is an uncharacterized protein from Bacillus subtilis (strain 168).